The primary structure comprises 271 residues: Putative carboxymethylenebutenolidase (271 aa).

Residues C147, D204, and H236 contribute to the active site.

It belongs to the dienelactone hydrolase family.

It carries out the reaction 2-(5-oxo-2,5-dihydrofuran-2-ylidene)acetate + H2O = 4-oxohex-2-enedioate + H(+). The chain is Putative carboxymethylenebutenolidase (ysgA) from Escherichia coli (strain K12).